A 908-amino-acid chain; its full sequence is SH3 and PX domain-containing protein 2B (908 aa).

Residues 5-129 (RSIVEVKVLD…QFFETRPEDL (125 aa)) form the PX domain. A Phosphotyrosine modification is found at Tyr-25. 2 consecutive SH3 domains span residues 152 to 211 (MVLE…GQDG) and 221 to 280 (EEEE…KNSG). 2 positions are modified to phosphoserine: Ser-279 and Ser-291. 2 disordered regions span residues 280 to 300 (GEPL…ALDL) and 315 to 366 (ELLN…PPIP). Basic and acidic residues predominate over residues 315-337 (ELLNNQRDGRFEGRLVPDGDVKQ). Residues 338 to 347 (RSPKMRQRPP) show a composition bias toward basic residues. One can recognise an SH3 3 domain in the interval 368–427 (QVEEEYYTIAEFQTTIPDGISFQAGLKVEVIEKSLSGWWYIQMEDKEGWAPATFIDKYKK). A disordered region spans residues 455–832 (TENNTGPEAV…LGPRVTGKVG (378 aa)). 5 stretches are compositionally biased toward basic and acidic residues: residues 486 to 499 (KDWK…RKAS), 516 to 546 (QEEK…KMEP), 569 to 584 (LARD…DKSK), 595 to 606 (CGHKVLAKEVKK), and 615 to 625 (SKAELSEEKVD). Phosphoserine occurs at positions 499 and 528. Tyr-661 carries the phosphotyrosine modification. Over residues 671–684 (KSQEKALLDGESHH) the composition is skewed to basic and acidic residues. The segment covering 754 to 764 (VVPPRRPPPPK) has biased composition (pro residues). Residue Ser-840 is modified to Phosphoserine. One can recognise an SH3 4 domain in the interval 847 to 908 (PKDSLYVAVA…IPSNYLRKKP (62 aa)).

This sequence belongs to the SH3PXD2 family. As to quaternary structure, interacts with NOXO1. Interacts (via SH3 domains) with NOXA1; the interaction is direct. Interacts with ADAM15. Interacts with FASLG. Phosphorylated in SRC-transformed cells. Highly expressed in the stromal-vascular fraction of white adipose tissue with moderate expression in heart, skeletal muscle and the mature adipocyte fraction of white adipose tissue. Also expressed in brain, spleen, kidney and liver. Expressed in white and brown adipose tissues, eye, lung, heart, brain, spleen, stomach, liver and skeletal muscle (at protein level). Not expressed in kidney or bone marrow.

Its subcellular location is the cytoplasm. The protein localises to the cell projection. It is found in the podosome. In terms of biological role, adapter protein involved in invadopodia and podosome formation and extracellular matrix degradation. Binds matrix metalloproteinases (ADAMs), NADPH oxidases (NOXs) and phosphoinositides. Acts as an organizer protein that allows NOX1- or NOX3-dependent reactive oxygen species (ROS) generation and ROS localization. Plays a role in mitotic clonal expansion during the immediate early stage of adipocyte differentiation. The protein is SH3 and PX domain-containing protein 2B (Sh3pxd2b) of Mus musculus (Mouse).